A 143-amino-acid chain; its full sequence is Nucleoside diphosphate kinase 2 (143 aa).

The ATP site is built by K11, F59, R87, T93, R104, and N114. The Pros-phosphohistidine intermediate role is filled by H117.

Belongs to the NDK family. As to quaternary structure, homotetramer. It depends on Mg(2+) as a cofactor.

The protein localises to the cytoplasm. It catalyses the reaction a 2'-deoxyribonucleoside 5'-diphosphate + ATP = a 2'-deoxyribonucleoside 5'-triphosphate + ADP. The catalysed reaction is a ribonucleoside 5'-diphosphate + ATP = a ribonucleoside 5'-triphosphate + ADP. Major role in the synthesis of nucleoside triphosphates other than ATP. The ATP gamma phosphate is transferred to the NDP beta phosphate via a ping-pong mechanism, using a phosphorylated active-site intermediate. This Protochlamydia amoebophila (strain UWE25) protein is Nucleoside diphosphate kinase 2.